Reading from the N-terminus, the 812-residue chain is Lon protease (812 aa).

Residues 22 to 215 (YAVLPLRDIV…KALSFMEAEI (194 aa)) form the Lon N-terminal domain. 367-374 (GPPGVGKT) serves as a coordination point for ATP. The Lon proteolytic domain maps to 602-783 (EDQVGVVTGL…GEVLKHALVR (182 aa)). Active-site residues include Ser689 and Lys732. The tract at residues 787-812 (PIEWTEQENPTAVPPVEDEAGASLAH) is disordered.

This sequence belongs to the peptidase S16 family. As to quaternary structure, homohexamer. Organized in a ring with a central cavity.

It is found in the cytoplasm. It carries out the reaction Hydrolysis of proteins in presence of ATP.. Functionally, ATP-dependent serine protease that mediates the selective degradation of mutant and abnormal proteins as well as certain short-lived regulatory proteins. Required for cellular homeostasis and for survival from DNA damage and developmental changes induced by stress. Degrades polypeptides processively to yield small peptide fragments that are 5 to 10 amino acids long. Binds to DNA in a double-stranded, site-specific manner. This is Lon protease from Brucella melitensis biotype 1 (strain ATCC 23456 / CCUG 17765 / NCTC 10094 / 16M).